Consider the following 46-residue polypeptide: Diuretic hormone (46 aa).

An Isoleucine amide modification is found at I46.

Belongs to the sauvagine/corticotropin-releasing factor/urotensin I family.

The protein localises to the secreted. Its function is as follows. Regulation of fluid secretion. Stimulates primary urine secretion by Malpighian tubules and causes a dose-dependent stimulation of cAMP levels in the tubules. The protein is Diuretic hormone of Periplaneta americana (American cockroach).